Reading from the N-terminus, the 540-residue chain is O-phosphoserine--tRNA(Cys) ligase (540 aa).

Residues histidine 188–threonine 190, serine 233–serine 235, tyrosine 275–tyrosine 276, and asparagine 319 contribute to the substrate site.

It belongs to the class-II aminoacyl-tRNA synthetase family. O-phosphoseryl-tRNA(Cys) synthetase subfamily. In terms of assembly, homotetramer. Interacts with SepCysS.

It catalyses the reaction tRNA(Cys) + O-phospho-L-serine + ATP = O-phospho-L-seryl-tRNA(Cys) + AMP + diphosphate. Catalyzes the attachment of O-phosphoserine (Sep) to tRNA(Cys). In Methanococcus aeolicus (strain ATCC BAA-1280 / DSM 17508 / OCM 812 / Nankai-3), this protein is O-phosphoserine--tRNA(Cys) ligase.